The chain runs to 415 residues: Glutamyl-tRNA reductase (415 aa).

Substrate is bound by residues 49–52, Ser106, 111–113, and Gln117; these read TCNR and EPQ. Catalysis depends on Cys50, which acts as the Nucleophile. Residue 186–191 participates in NADP(+) binding; it reads GAGETI.

Belongs to the glutamyl-tRNA reductase family. In terms of assembly, homodimer.

The catalysed reaction is (S)-4-amino-5-oxopentanoate + tRNA(Glu) + NADP(+) = L-glutamyl-tRNA(Glu) + NADPH + H(+). It functions in the pathway porphyrin-containing compound metabolism; protoporphyrin-IX biosynthesis; 5-aminolevulinate from L-glutamyl-tRNA(Glu): step 1/2. Functionally, catalyzes the NADPH-dependent reduction of glutamyl-tRNA(Glu) to glutamate 1-semialdehyde (GSA). In Teredinibacter turnerae (strain ATCC 39867 / T7901), this protein is Glutamyl-tRNA reductase.